The primary structure comprises 60 residues: Mastoparan-VT5 (60 aa).

The N-terminal stretch at 1 to 27 (MKNTILILFTAFIALLGFFGMIAEPLA) is a signal peptide. 4 AXPX repeats span residues 27–30 (ADPL), 31–34 (ADPL), 37–40 (ADPD), and 41–44 (ADPE). Positions 28 to 45 (DPLADPLPDADPDADPET) are excised as a propeptide.

Belongs to the MCD family. Mastoparan subfamily. As to expression, expressed by the venom gland.

Its subcellular location is the secreted. The synthetic peptide shows weak antimicrobial activities against a few Gram-positive bacteria (only 2 on the 11 strains tested) and the fungus C.albicans. Does not show activity against all the Gram-negative bacteria tested. Exhibits little hemolytic activity against washed human erythrocytes. This Vespa tropica (Greater banded hornet) protein is Mastoparan-VT5.